A 353-amino-acid chain; its full sequence is Ubiquinol oxidase 1, mitochondrial (353 aa).

The N-terminal 69 residues, M1–S69, are a transit peptide targeting the mitochondrion. A disordered region spans residues D77–D99. A helical transmembrane segment spans residues A178–C198. Residues E182, E221, and H224 each contribute to the Fe cation site. The chain crosses the membrane as a helical span at residues A240 to S260. Positions 272, 323, and 326 each coordinate Fe cation.

The protein belongs to the alternative oxidase family. In terms of assembly, homodimer; disulfide-linked. The cofactor is Fe cation.

It is found in the mitochondrion inner membrane. It carries out the reaction 2 a ubiquinol + O2 = 2 a ubiquinone + 2 H2O. Stimulated by reduction of the disulfide bond and the presence of pyruvate. Functionally, catalyzes the cyanide-resistant oxidation of ubiquinol and the reduction of molecular oxygen to water, but does not translocate protons and consequently is not linked to oxidative phosphorylation. May increase respiration when the cytochrome respiratory pathway is restricted, or in response to low temperatures. In Nicotiana tabacum (Common tobacco), this protein is Ubiquinol oxidase 1, mitochondrial (AOX1).